The chain runs to 329 residues: Malate dehydrogenase (329 aa).

12–18 (GAAGQIC) lines the NAD(+) pocket. Residues Arg95 and Arg101 each coordinate substrate. NAD(+) contacts are provided by residues Asn108, Gln115, and 132–134 (VGN). Asn134 and Arg165 together coordinate substrate. His190 functions as the Proton acceptor in the catalytic mechanism.

Belongs to the LDH/MDH superfamily. MDH type 2 family. In terms of assembly, homodimer.

The catalysed reaction is (S)-malate + NAD(+) = oxaloacetate + NADH + H(+). Functionally, catalyzes the reversible oxidation of malate to oxaloacetate. This chain is Malate dehydrogenase, found in Aquaspirillum arcticum.